The sequence spans 87 residues: uncharacterized protein (87 aa).

The segment at 43 to 87 (NQGYGQNFGDASGFMGTRSHVDDRDQIDSPASFESEAVNSSIKRK) is disordered.

This is an uncharacterized protein from Bacillus subtilis (strain 168).